The following is a 438-amino-acid chain: Transposon Ty2-OR2 Gag polyprotein (438 aa).

Disordered stretches follow at residues 1–88 (MESQ…YQQH), 365–397 (NVSR…AKAH), and 419–438 (SSQY…TERI). 2 stretches are compositionally biased toward polar residues: residues 19–39 (ASVT…SASN) and 49–60 (KVNSQEETTPGT). The interval 295-397 (ENNINVSDRL…SSKPRAAKAH (103 aa)) is RNA-binding. Low complexity predominate over residues 369 to 381 (TSPNTTNTKVTTR).

As to quaternary structure, homotrimer.

It localises to the cytoplasm. In terms of biological role, capsid protein (CA) is the structural component of the virus-like particle (VLP), forming the shell that encapsulates the retrotransposons dimeric RNA genome. The particles are assembled from trimer-clustered units and there are holes in the capsid shells that allow for the diffusion of macromolecules. CA also has nucleocapsid-like chaperone activity, promoting primer tRNA(i)-Met annealing to the multipartite primer-binding site (PBS), dimerization of Ty2 RNA and initiation of reverse transcription. In Saccharomyces cerevisiae (strain ATCC 204508 / S288c) (Baker's yeast), this protein is Transposon Ty2-OR2 Gag polyprotein (TY2A-OR2).